The sequence spans 98 residues: Large ribosomal subunit protein uL23 (98 aa).

This sequence belongs to the universal ribosomal protein uL23 family. Part of the 50S ribosomal subunit. Contacts protein L29, and trigger factor when it is bound to the ribosome.

Functionally, one of the early assembly proteins it binds 23S rRNA. One of the proteins that surrounds the polypeptide exit tunnel on the outside of the ribosome. Forms the main docking site for trigger factor binding to the ribosome. This chain is Large ribosomal subunit protein uL23, found in Nitrobacter hamburgensis (strain DSM 10229 / NCIMB 13809 / X14).